We begin with the raw amino-acid sequence, 66 residues long: DNA-directed RNA polymerase subunit Rpo10 (66 aa).

Residues Cys7, Cys10, Cys44, and Cys45 each contribute to the Zn(2+) site.

It belongs to the archaeal Rpo10/eukaryotic RPB10 RNA polymerase subunit family. As to quaternary structure, part of the RNA polymerase complex. Zn(2+) is required as a cofactor.

The protein localises to the cytoplasm. It carries out the reaction RNA(n) + a ribonucleoside 5'-triphosphate = RNA(n+1) + diphosphate. Functionally, DNA-dependent RNA polymerase (RNAP) catalyzes the transcription of DNA into RNA using the four ribonucleoside triphosphates as substrates. The polypeptide is DNA-directed RNA polymerase subunit Rpo10 (Pyrobaculum neutrophilum (strain DSM 2338 / JCM 9278 / NBRC 100436 / V24Sta) (Thermoproteus neutrophilus)).